The following is a 1975-amino-acid chain: Cadherin-87A (1975 aa).

The first 17 residues, Met-1–Ala-17, serve as a signal peptide directing secretion. The Extracellular portion of the chain corresponds to Lys-18–Ala-1775. Cadherin domains lie at Thr-28–Phe-132, Gln-133–Phe-245, Gln-246–Phe-358, Asn-359–Phe-472, Glu-473–Cys-669, Glu-670–Phe-774, Glu-775–Phe-878, Val-879–Phe-998, Asn-999–Phe-1103, Ser-1104–Phe-1211, Thr-1212–Phe-1318, Val-1319–Phe-1431, Pro-1432–Phe-1553, and Glu-1554–Glu-1677. Residues Asn-39, Asn-77, and Asn-203 are each glycosylated (N-linked (GlcNAc...) asparagine). A glycan (N-linked (GlcNAc...) asparagine) is linked at Asn-424. The disordered stretch occupies residues Cys-535–Gly-560. Residues Asp-537–Leu-549 are compositionally biased toward basic and acidic residues. The span at Asn-550–Gly-560 shows a compositional bias: acidic residues. N-linked (GlcNAc...) asparagine glycosylation is found at Asn-730 and Asn-761. N-linked (GlcNAc...) asparagine glycosylation is found at Asn-1039, Asn-1049, Asn-1111, Asn-1163, Asn-1217, Asn-1325, Asn-1349, Asn-1492, Asn-1576, and Asn-1691. A helical transmembrane segment spans residues Val-1776 to Leu-1796. The Cytoplasmic segment spans residues Cys-1797–Ile-1975. The span at Tyr-1887 to Leu-1899 shows a compositional bias: polar residues. The tract at residues Tyr-1887–Ala-1916 is disordered. The span at Thr-1900–Ala-1916 shows a compositional bias: gly residues.

The protein localises to the cell membrane. In terms of biological role, cadherins are calcium-dependent cell adhesion proteins. They preferentially interact with themselves in a homophilic manner in connecting cells. The protein is Cadherin-87A (Cad87A) of Drosophila melanogaster (Fruit fly).